The primary structure comprises 364 residues: MEAVLVAMSVPATTEDDGFSLITDKLSYNLTPTSDVEIVTSDNRRIPAHSGVLASASPVLMNIMKKPMRRYRGCGSKRVIKILGVPCDAVSVFIKFLYSSSLTEDEMERYGIHLLALSHVYMVTQLKQRCSKGVVQRLTTENVVDVLQLARLCDAPDVCLRSMRLIHSQFKTVEQTEGWKFIQEHDPFLELDILQFIDDAESRKKRRRRHRKEQDLYMQLSEAMECIEHICTQGCTLVGPSNVVDNNKKSMTAEKSEPCKAFSTCYGLQLLIRHFAVCKRRNNDKGCLRCKRMLQLFRLHSLICDQPDSCRVPLCRQFRKRGEQDKKMGEDTKWKLLVTRVVSAKAMTSLCQSKKNKCEQAQGV.

Residues Ser34 to Glu106 form the BTB domain. The Nuclear localization signal signature appears at Arg203–Lys212. Residues Asp215 to Arg316 form a TAZ-type zinc finger. The segment at Lys327–Leu350 is caM-binding.

In terms of assembly, interacts with CUL3A. Interacts with GTE11/BET10 through the BTB domain. Preferentially expressed in young leaves and roots.

Its subcellular location is the nucleus. It localises to the cytoplasm. It functions in the pathway protein modification; protein ubiquitination. May act as a substrate-specific adapter of an E3 ubiquitin-protein ligase complex (CUL3-RBX1-BTB) which mediates the ubiquitination and subsequent proteasomal degradation of target proteins. Plays a key role as a component of the TAC1-mediated telomerase activation pathway certainly by targeting a telomerase repressor to degradation. Seems to occupy an integral position in a complex signaling network that perceives, integrates, and responds to multiple, and sometimes competing, signals. Enhances responses to auxin in postgermination and vegetative development. Also negatively regulates ABA- and sugar-mediated inhibition of the germination. Essential for female and male gametophyte development. In Arabidopsis thaliana (Mouse-ear cress), this protein is BTB/POZ and TAZ domain-containing protein 2 (BT2).